The primary structure comprises 263 residues: Troponin T, slow skeletal muscle (263 aa).

The segment covering 1 to 38 (MSDAEEQEYEEEQPEEEEAAEEEEEAPEEPEPAAEPEE) has biased composition (acidic residues). Disordered regions lie at residues 1 to 64 (MSDA…RVDF) and 109 to 154 (AERA…KKKV). A Phosphoserine; by CK2 modification is found at serine 2. The segment covering 44–56 (SRPVVPPLIPPKI) has biased composition (pro residues). Positions 109-150 (AERAEQQRFRTEKERERQAKLAEEKMRKEEEEAKKRAEDDAK) are enriched in basic and acidic residues.

This sequence belongs to the troponin T family. Interacts with TPM3. In terms of tissue distribution, expressed dominantly in slow muscles, like masseter, diaphragm, psoas major and spinnalis. Isoform 2 is also expressed in fast muscles.

Troponin T is the tropomyosin-binding subunit of troponin, the thin filament regulatory complex which confers calcium-sensitivity to striated muscle actomyosin ATPase activity. The chain is Troponin T, slow skeletal muscle (TNNT1) from Bos taurus (Bovine).